We begin with the raw amino-acid sequence, 562 residues long: MVKIVTVKTKAYPDQKPGTSGLRKRVKVFQSSTNYAENFIQSIISTVEPAQRQEATLVVGGDGRFYMKEAIQLIVRIAAANGIGRLVIGQNGILSTPAVSCIIRKIKAIGGIILTASHNPGGPNGDFGIKFNISNGGPAPEAITDKIFQISKTIEEYAICPDLKVDLGVLGKQQFDLENKFKPFTVEIVDSVEAYATMLRNIFDFNALKELLSGPNRLKIRIDAMHGVVGPYVKKILCEELGAPANSAVNCVPLEDFGGHHPDPNLTYAADLVETMKSGEHDFGAAFDGDGDRNMILGKHGFFVNPSDSVAVIAANIFSIPYFQQTGVRGFARSMPTSGALDRVANATKIALYETPTGWKFFGNLMDASKLSLCGEESFGTGSDHIREKDGLWAVLAWLSILATRKQSVEDILKDHWHKFGRNFFTRYDYEEVEAEGATKMMKDLEALMFDRSFVGKQFSANDKVYTVEKADNFEYHDPVDGSVSKNQGLRLIFADGSRIIFRLSGTGSAGATIRLYIDSYEKDNAKINQDPQVMLAPLISIALKVSQLQERTGRTAPTVIT.

An N-acetylmethionine modification is found at Met1. Lys16 is modified (N6-acetyllysine). Arg23 serves as a coordination point for alpha-D-glucose 1,6-bisphosphate. Phosphothreonine is present on Thr115. Ser117 contacts alpha-D-glucose 1,6-bisphosphate. Catalysis depends on Ser117, which acts as the Phosphoserine intermediate. Residue Ser117 participates in Mg(2+) binding. Residues Ser117 and Ser134 each carry the phosphoserine modification. Phosphothreonine is present on Thr185. Position 213 is a phosphoserine (Ser213). Asp288, Asp290, and Asp292 together coordinate Mg(2+). The alpha-D-glucose 1,6-bisphosphate site is built by Asp292 and Arg293. Lys349 is modified (N6-acetyllysine). Tyr353 is subject to Phosphotyrosine. Thr357 contributes to the alpha-D-glucose 1,6-bisphosphate binding site. Phosphoserine is present on Ser369. Glu376, Ser378, and Lys389 together coordinate alpha-D-glucose 1,6-bisphosphate. Position 378 is a phosphoserine (Ser378). Lys419 carries the post-translational modification N6-succinyllysine. At Thr467 the chain carries Phosphothreonine; by PAK1. A phosphoserine mark is found at Ser485 and Ser505. The residue at position 507 (Thr507) is a Phosphothreonine. Ser509 and Ser541 each carry phosphoserine.

The protein belongs to the phosphohexose mutase family. Monomer. Mg(2+) serves as cofactor. In terms of processing, isoform 2 is the major calmodulin-dependent phosphoprotein in junctional skeletal sarcoplasmic reticulum vesicles. Phosphorylation at Thr-467 by PAK1 significantly enhances enzymatic activity.

It localises to the cytoplasm. The protein localises to the sarcoplasmic reticulum. The enzyme catalyses alpha-D-glucose 1-phosphate = alpha-D-glucose 6-phosphate. It carries out the reaction O-phospho-L-seryl-[protein] + alpha-D-glucose 1-phosphate = alpha-D-glucose 1,6-bisphosphate + L-seryl-[protein]. The catalysed reaction is alpha-D-glucose 1,6-bisphosphate + L-seryl-[protein] = O-phospho-L-seryl-[protein] + alpha-D-glucose 6-phosphate. Glucose-1,6-bisphosphate enhances phosphorylation of the active site Ser-117, and thereby increases enzyme activity. Functionally, catalyzes the reversible isomerization of alpha-D-glucose 1-phosphate to alpha-D-glucose 6-phosphate. The mechanism proceeds via the intermediate compound alpha-D-glucose 1,6-bisphosphate. This enzyme participates in both the breakdown and synthesis of glucose. This is Phosphoglucomutase-1 (PGM1) from Oryctolagus cuniculus (Rabbit).